The chain runs to 143 residues: Large ribosomal subunit protein uL13 (143 aa).

The protein belongs to the universal ribosomal protein uL13 family. As to quaternary structure, part of the 50S ribosomal subunit.

In terms of biological role, this protein is one of the early assembly proteins of the 50S ribosomal subunit, although it is not seen to bind rRNA by itself. It is important during the early stages of 50S assembly. The chain is Large ribosomal subunit protein uL13 from Rubrobacter xylanophilus (strain DSM 9941 / JCM 11954 / NBRC 16129 / PRD-1).